Consider the following 709-residue polypeptide: Twinkle homolog protein, chloroplastic/mitochondrial (709 aa).

The transit peptide at 1-16 (MRFLLRLPQIHFRKLS) directs the protein to the chloroplast and mitochondrion. The region spanning 280 to 385 (SEVIIVEGEI…KKSEDEHFKD (106 aa)) is the Toprim domain. The Mg(2+) site is built by Glu-286, Asp-348, and Asp-350. The SF4 helicase domain maps to 430–698 (THGHEYGVST…GSYSDSPVTP (269 aa)). Residue 460–467 (GIPNSGKS) participates in ATP binding.

Mg(2+) is required as a cofactor. As to expression, expressed in young leaves and shoot apex tissues. Detected in developing tissues such as cotyledons, sepals, pistils and inflorescences. Nearly undetectable in mature leaves.

It localises to the plastid. Its subcellular location is the chloroplast. The protein resides in the mitochondrion. It catalyses the reaction ATP + H2O = ADP + phosphate + H(+). In terms of biological role, has both DNA primase and DNA helicase activities and may be involved in organelle DNA replication. Capable of producing RNA primers of 9 to 18 bases from a single-stranded DNA template. This Arabidopsis thaliana (Mouse-ear cress) protein is Twinkle homolog protein, chloroplastic/mitochondrial.